The chain runs to 192 residues: Putative 3-methyladenine DNA glycosylase (192 aa).

It belongs to the DNA glycosylase MPG family.

The protein is Putative 3-methyladenine DNA glycosylase of Bdellovibrio bacteriovorus (strain ATCC 15356 / DSM 50701 / NCIMB 9529 / HD100).